The following is a 930-amino-acid chain: MLLGWASLLLCAFRLPLAAVGPAATPAQDKAGQPPTAAAAAQPRRRQGEEVQERAEPPGHPHPLAQRRRSKGLVQNIDQLYSGGGKVGYLVYAGGRRFLLDLERDGSVGIAGFVPAGGGTSAPWRHRSHCFYRGTVDGSPRSLAVFDLCGGLDGFFAVKHARYTLKPLLRGPWAEEEKGRVYGDGSARILHVYTREGFSFEALPPRASCETPASTPEAHEHAPAHSNPSGRAALASQLLDQSALSPAGGSGPQTWWRRRRRSISRARQVELLLVADASMARLYGRGLQHYLLTLASIANRLYSHASIENHIRLAVVKVVVLGDKDKSLEVSKNAATTLKNFCKWQHQHNQLGDDHEEHYDAAILFTREDLCGHHSCDTLGMADVGTICSPERSCAVIEDDGLHAAFTVAHEIGHLLGLSHDDSKFCEETFGSTEDKRLMSSILTSIDASKPWSKCTSATITEFLDDGHGNCLLDLPRKQILGPEELPGQTYDATQQCNLTFGPEYSVCPGMDVCARLWCAVVRQGQMVCLTKKLPAVEGTPCGKGRICLQGKCVDKTKKKYYSTSSHGNWGSWGSWGQCSRSCGGGVQFAYRHCNNPAPRNNGRYCTGKRAIYRSCSLMPCPPNGKSFRHEQCEAKNGYQSDAKGVKTFVEWVPKYAGVLPADVCKLTCRAKGTGYYVVFSPKVTDGTECRLYSNSVCVRGKCVRTGCDGIIGSKLQYDKCGVCGGDNSSCTKIVGTFNKKSKGYTDVVRIPEGATHIKVRQFKAKDQTRFTAYLALKKKNGEYLINGKYMISTSETIIDINGTVMNYSGWSHRDDFLHGMGYSATKEILIVQILATDPTKPLDVRYSFFVPKKSTPKVNSVTSHGSNKVGSHTSQPQWVTGPWLACSRTCDTGWHTRTVQCQDGNRKLAKGCPLSQRPSAFKQCLLKKC.

The N-terminal stretch at 1-16 is a signal peptide; it reads MLLGWASLLLCAFRLP. Residues 17 to 261 constitute a propeptide that is removed on maturation; that stretch reads LAAVGPAATP…PQTWWRRRRR (245 aa). Disordered regions lie at residues 24–69 and 206–231; these read ATPA…QRRR and RASC…PSGR. Positions 31-42 are enriched in low complexity; sequence AGQPPTAAAAAQ. Over residues 46 to 59 the composition is skewed to basic and acidic residues; sequence RQGEEVQERAEPPG. Residues 207–214 carry the Cysteine switch motif; the sequence is ASCETPAS. Residue Cys-209 coordinates Zn(2+). The 210-residue stretch at 267 to 476 folds into the Peptidase M12B domain; sequence RQVELLLVAD…GHGNCLLDLP (210 aa). Intrachain disulfides connect Cys-342–Cys-394, Cys-371–Cys-376, Cys-388–Cys-471, Cys-426–Cys-455, Cys-497–Cys-519, Cys-508–Cys-529, Cys-514–Cys-548, and Cys-542–Cys-553. His-410 is a binding site for Zn(2+). Glu-411 is an active-site residue. Positions 414 and 420 each coordinate Zn(2+). Residues 485 to 566 enclose the Disintegrin domain; it reads ELPGQTYDAT…TKKKYYSTSS (82 aa). A glycan (N-linked (GlcNAc...) asparagine) is linked at Asn-498. Positions 567–622 constitute a TSP type-1 1 domain; that stretch reads HGNWGSWGSWGQCSRSCGGGVQFAYRHCNNPAPRNNGRYCTGKRAIYRSCSLMPCP. Trp-570 and Trp-573 each carry a C-linked (Man) tryptophan glycan. 3 disulfides stabilise this stretch: Cys-579-Cys-616, Cys-583-Cys-621, and Cys-594-Cys-606. Residue Ser-582 is glycosylated (O-linked (Fuc...) serine). N-linked (GlcNAc...) asparagine glycans are attached at residues Asn-728, Asn-802, and Asn-807. The tract at residues 732–874 is spacer; it reads TKIVGTFNKK…HGSNKVGSHT (143 aa). One can recognise a TSP type-1 2 domain in the interval 875 to 929; it reads SQPQWVTGPWLACSRTCDTGWHTRTVQCQDGNRKLAKGCPLSQRPSAFKQCLLKK.

It depends on Zn(2+) as a cofactor. In terms of processing, the precursor is cleaved by furin and PCSK7 outside of the cell. Glycosylated. Can be O-fucosylated by POFUT2 on a serine or a threonine residue found within the consensus sequence C1-X(2)-(S/T)-C2-G of the TSP type-1 repeat domains where C1 and C2 are the first and second cysteine residue of the repeat, respectively. Fucosylated repeats can then be further glycosylated by the addition of a beta-1,3-glucose residue by the glucosyltransferase, B3GALTL. Fucosylation mediates the efficient secretion of ADAMTS family members. Can also be C-glycosylated with one or two mannose molecules on tryptophan residues within the consensus sequence W-X-X-W of the TPRs, and N-glycosylated. These other glycosylations can also facilitate secretion. Expressed at low level in placenta primarily but also detected in heart and brain, cervix, uterus, bladder, esophagus, rib cartilage, chondroblastoma, fibrous tissue and a joint capsule from an arthritic patient.

It is found in the secreted. The protein localises to the extracellular space. The protein resides in the extracellular matrix. In terms of biological role, metalloproteinase that plays an important role in connective tissue organization, development, inflammation and cell migration. Extracellular matrix (ECM) degrading enzyme that show proteolytic activity toward the hyalectan group of chondroitin sulfate proteoglycans (CSPGs) including ACAN, VCAN, BCAN and NCAN. Cleavage within the hyalectans occurs at Glu-Xaa recognition motifs. Plays a role in embryonic development, including limb and cardiac morphogenesis, and skeletal muscle development through its VCAN remodeling properties. Cleaves VCAN in the pericellular matrix surrounding myoblasts, facilitating myoblast contact and fusion which is required for skeletal muscle development and regeneration. Participates in development of brown adipose tissue and browning of white adipose tissue. Plays an important role for T-lymphocyte migration from draining lymph nodes following viral infection. In Homo sapiens (Human), this protein is A disintegrin and metalloproteinase with thrombospondin motifs 5 (ADAMTS5).